Reading from the N-terminus, the 316-residue chain is Lipoyl synthase (316 aa).

Positions 66, 71, 77, 92, 96, 99, and 306 each coordinate [4Fe-4S] cluster. One can recognise a Radical SAM core domain in the interval 78–295 (YSQQTATFMV…ADIAKSMGFK (218 aa)).

This sequence belongs to the radical SAM superfamily. Lipoyl synthase family. [4Fe-4S] cluster serves as cofactor.

Its subcellular location is the cytoplasm. It carries out the reaction [[Fe-S] cluster scaffold protein carrying a second [4Fe-4S](2+) cluster] + N(6)-octanoyl-L-lysyl-[protein] + 2 oxidized [2Fe-2S]-[ferredoxin] + 2 S-adenosyl-L-methionine + 4 H(+) = [[Fe-S] cluster scaffold protein] + N(6)-[(R)-dihydrolipoyl]-L-lysyl-[protein] + 4 Fe(3+) + 2 hydrogen sulfide + 2 5'-deoxyadenosine + 2 L-methionine + 2 reduced [2Fe-2S]-[ferredoxin]. Its pathway is protein modification; protein lipoylation via endogenous pathway; protein N(6)-(lipoyl)lysine from octanoyl-[acyl-carrier-protein]: step 2/2. In terms of biological role, catalyzes the radical-mediated insertion of two sulfur atoms into the C-6 and C-8 positions of the octanoyl moiety bound to the lipoyl domains of lipoate-dependent enzymes, thereby converting the octanoylated domains into lipoylated derivatives. The sequence is that of Lipoyl synthase from Rhodopirellula baltica (strain DSM 10527 / NCIMB 13988 / SH1).